Consider the following 202-residue polypeptide: NADH-quinone oxidoreductase subunit C (202 aa).

The protein belongs to the complex I 30 kDa subunit family. As to quaternary structure, NDH-1 is composed of 14 different subunits. Subunits NuoB, C, D, E, F, and G constitute the peripheral sector of the complex.

The protein resides in the cell inner membrane. It catalyses the reaction a quinone + NADH + 5 H(+)(in) = a quinol + NAD(+) + 4 H(+)(out). In terms of biological role, NDH-1 shuttles electrons from NADH, via FMN and iron-sulfur (Fe-S) centers, to quinones in the respiratory chain. The immediate electron acceptor for the enzyme in this species is believed to be ubiquinone. Couples the redox reaction to proton translocation (for every two electrons transferred, four hydrogen ions are translocated across the cytoplasmic membrane), and thus conserves the redox energy in a proton gradient. The protein is NADH-quinone oxidoreductase subunit C of Bartonella quintana (strain Toulouse) (Rochalimaea quintana).